A 103-amino-acid polypeptide reads, in one-letter code: Small ribosomal subunit protein uS10 (103 aa).

Belongs to the universal ribosomal protein uS10 family. In terms of assembly, part of the 30S ribosomal subunit.

In terms of biological role, involved in the binding of tRNA to the ribosomes. The sequence is that of Small ribosomal subunit protein uS10 from Shewanella denitrificans (strain OS217 / ATCC BAA-1090 / DSM 15013).